Reading from the N-terminus, the 146-residue chain is Ankyrin repeat-containing protein P16F5.05c (146 aa).

4 ANK repeats span residues 1-31 (MDVDDLIYACRAADEELLDEIIEKCPQELSR), 35-64 (NGNSGLHMASANGHIAVVQKIIPYLNKEVI), 70-99 (SGNTAMHWAALNGHAEICKLLLEAGGDPHI), and 103-132 (YEKSPIYEADIRNQQKVMDLFLDFEIAKGS).

It localises to the cytoplasm. The protein localises to the nucleus. This Schizosaccharomyces pombe (strain 972 / ATCC 24843) (Fission yeast) protein is Ankyrin repeat-containing protein P16F5.05c.